A 223-amino-acid chain; its full sequence is Ubiquitin carboxyl-terminal hydrolase isozyme L1 (223 aa).

At Met1 the chain carries N-acetylmethionine. Residues 2–221 (QLKPMEINPE…VRFSAVALCK (220 aa)) form the UCH catalytic domain. Positions 5–10 (PMEINP) are interaction with ubiquitin. The active-site Nucleophile is Cys90. The residue at position 125 (Ser125) is a Phosphoserine. The active-site Proton donor is His161. Positions 211–216 (EVRFSA) are interaction with ubiquitin. The S-farnesyl cysteine moiety is linked to residue Cys220. The propeptide at 221–223 (KAA) is removed in mature form.

The protein belongs to the peptidase C12 family. As to quaternary structure, monomer. Homodimer. Interacts with COPS5 and SNCA. Post-translationally, O-glycosylated.

It is found in the cytoplasm. The protein localises to the endoplasmic reticulum membrane. The enzyme catalyses Thiol-dependent hydrolysis of ester, thioester, amide, peptide and isopeptide bonds formed by the C-terminal Gly of ubiquitin (a 76-residue protein attached to proteins as an intracellular targeting signal).. Its function is as follows. Ubiquitin-protein hydrolase involved both in the processing of ubiquitin precursors and of ubiquitinated proteins. This enzyme is a thiol protease that recognizes and hydrolyzes a peptide bond at the C-terminal glycine of ubiquitin. Also binds to free monoubiquitin and may prevent its degradation in lysosomes. The homodimer may have ATP-independent ubiquitin ligase activity. The polypeptide is Ubiquitin carboxyl-terminal hydrolase isozyme L1 (UCHL1) (Equus caballus (Horse)).